A 318-amino-acid chain; its full sequence is MMELRYNPLTDEWVIVSAATQKRPVQPSKTECPICVGGLELPEEYDLVTFENRYPSLKKDPPPVNWKEKGPFRKEESRGVCEVVVYTSDHNTALPGMPLKQIEKLVEMWVDRTRDLSQHDFVKYIFIFENRGKEVGASLPHPHGQIYAFPFLPKRIEVKIGAMRKWYEEKRKCPICEVLESEGEERKVYETEHFLALVPFYARFPYEVHIYPKRHVSTLLEFSKEEKKEFAKVLKVVTAKYDKLFDQEFPYMMMFFQAPFNEEDVSHFFHFHVEFNPPKRDRDKLKWMASVETGTWAFINPVVPEEAARQLRETEVEI.

Residues C32, C35, and H90 each contribute to the Zn(2+) site. A UDP-alpha-D-glucose-binding site is contributed by N130. H141 is a Zn(2+) binding site. Catalysis depends on H143, which acts as the Tele-UMP-histidine intermediate. Q145 provides a ligand contact to UDP-alpha-D-glucose.

The protein belongs to the galactose-1-phosphate uridylyltransferase type 1 family. The cofactor is Zn(2+).

The catalysed reaction is alpha-D-galactose 1-phosphate + UDP-alpha-D-glucose = alpha-D-glucose 1-phosphate + UDP-alpha-D-galactose. Its pathway is carbohydrate metabolism; galactose metabolism. This chain is Galactose-1-phosphate uridylyltransferase (galT), found in Thermotoga maritima (strain ATCC 43589 / DSM 3109 / JCM 10099 / NBRC 100826 / MSB8).